A 730-amino-acid polypeptide reads, in one-letter code: MSDRFELYLTCPKGLEGLLAEEAKGLGLEEVREHTSAIRGAADMETAYRLCVWSRLANRVLLVLKRFSMKNADDLYDGVNAVDWADHLAADGTLAVEFSGHGSGIDNTHFGALKVKDAIVDKLRNREGLRPSVEKIDPDVRVHLRLDRGEAILSLDLSGHSLHQRGYRLQQGAAPLKENLAAAVLIRSGWPRIAAEGGALADPMCGVGTFLVEAAMIAADIAPNLKRERWGFSAWLGHVPALWRKVHDEAQARAQAGLAKPPLWIRGYEADPRLIQPGRNNVERAGLGDWVKIYQGEVSTFEPRPDQNQKGLVISNPPYGERLGDEASLLYLYQNLGERLRQACMGWEAAVFTGAPQLGKRMGIRSHKQYAFWNGALPCKLLLFKVQPDQFVTGERREAQPEGTEVRQQAPQASEPARLSEGAQMFANRLQKNLKQLGKWARREQIDCYRLYDADMPEYALAVDLYQDWVHVQEYAAPRSIDPDKAQARLLDALAAIPQALGISPQRVVLKRRERQSGTRQYERQATEGRFQEVNEGGVKLLVNLTDYLDTGLFLDHRPMRMRIQREAAGKRFLNLFCYTATATVHAAKGGARSTTSVDLSKTYLDWARRNLALNGYSERNRLEQSDVMAWLEGNRDSYDLIFIDPPTFSNSKRMEGVFDVQRDHVQLLDLAMARLAPGGVLYFSNNFRKFQLDEHLMARYAVEEITAQTLDPDFARNNRIHRAWRLQLR.

The THUMP domain occupies 46-157 (TAYRLCVWSR…RGEAILSLDL (112 aa)). Residues 395-418 (ERREAQPEGTEVRQQAPQASEPAR) form a disordered region.

The protein belongs to the methyltransferase superfamily. RlmKL family.

It is found in the cytoplasm. The catalysed reaction is guanosine(2445) in 23S rRNA + S-adenosyl-L-methionine = N(2)-methylguanosine(2445) in 23S rRNA + S-adenosyl-L-homocysteine + H(+). The enzyme catalyses guanosine(2069) in 23S rRNA + S-adenosyl-L-methionine = N(2)-methylguanosine(2069) in 23S rRNA + S-adenosyl-L-homocysteine + H(+). Functionally, specifically methylates the guanine in position 2445 (m2G2445) and the guanine in position 2069 (m7G2069) of 23S rRNA. The polypeptide is Ribosomal RNA large subunit methyltransferase K/L (Pseudomonas putida (strain GB-1)).